The sequence spans 817 residues: Actin filament-associated protein 1-like 2 (817 aa).

Tyr-56 bears the Phosphotyrosine mark. Residues 63 to 164 form a disordered region; that stretch reads HKQQNAESQD…KGKSAPHQWP (102 aa). Residues 123–139 show a composition bias toward acidic residues; sequence YYEEAEPYDTSLNEDGE. 2 PH domains span residues 175-271 and 353-447; these read DARI…EVSG and SLET…SESG. The residue at position 408 (Ser-408) is a Phosphoserine. Phosphotyrosine is present on Tyr-413. Phosphoserine is present on Ser-484. Residues 512-528 show a composition bias toward low complexity; that stretch reads TTAGEAPEEATPATDAP. 2 disordered regions span residues 512–657 and 754–786; these read TTAG…KLGK and GTTVDTTHLESVSPRPKAATPTPAPDCTPVNSA. Positions 652 to 748 form a coiled coil; sequence EIKLGKNRTE…VKDSLRKAEA (97 aa). Positions 754-763 are enriched in polar residues; it reads GTTVDTTHLE. A compositionally biased stretch (low complexity) spans 767-782; the sequence is PRPKAATPTPAPDCTP.

In terms of assembly, interacts with SRC. Interacts with LCK when tyrosine phosphorylated. Tyrosine phosphorylated (by SRC).

Its subcellular location is the cytoplasm. Functionally, may play a role in a signaling cascade by enhancing the kinase activity of SRC. Contributes to SRC-regulated transcription activation. The protein is Actin filament-associated protein 1-like 2 (AFAP1L2) of Bos taurus (Bovine).